We begin with the raw amino-acid sequence, 202 residues long: ATP synthase subunit b (202 aa).

The chain crosses the membrane as a helical span at residues T9–A29.

This sequence belongs to the ATPase B chain family. As to quaternary structure, F-type ATPases have 2 components, F(1) - the catalytic core - and F(0) - the membrane proton channel. F(1) has five subunits: alpha(3), beta(3), gamma(1), delta(1), epsilon(1). F(0) has three main subunits: a(1), b(2) and c(10-14). The alpha and beta chains form an alternating ring which encloses part of the gamma chain. F(1) is attached to F(0) by a central stalk formed by the gamma and epsilon chains, while a peripheral stalk is formed by the delta and b chains.

The protein localises to the cell inner membrane. Functionally, f(1)F(0) ATP synthase produces ATP from ADP in the presence of a proton or sodium gradient. F-type ATPases consist of two structural domains, F(1) containing the extramembraneous catalytic core and F(0) containing the membrane proton channel, linked together by a central stalk and a peripheral stalk. During catalysis, ATP synthesis in the catalytic domain of F(1) is coupled via a rotary mechanism of the central stalk subunits to proton translocation. In terms of biological role, component of the F(0) channel, it forms part of the peripheral stalk, linking F(1) to F(0). This is ATP synthase subunit b from Pelobacter propionicus (strain DSM 2379 / NBRC 103807 / OttBd1).